Here is a 1538-residue protein sequence, read N- to C-terminus: Pentafunctional AROM polypeptide (1538 aa).

Residues 1 to 384 (MGVPTKISIL…HEPRASTVSN (384 aa)) form a 3-dehydroquinate synthase region. NAD(+)-binding positions include 44–46 (DTN), 81–84 (ESSK), 114–116 (GGV), and D119. R130 lines the 7-phospho-2-dehydro-3-deoxy-D-arabino-heptonate pocket. 139-140 (TT) lines the NAD(+) pocket. The 7-phospho-2-dehydro-3-deoxy-D-arabino-heptonate site is built by D146 and K152. Residue K161 coordinates NAD(+). N162 serves as a coordination point for 7-phospho-2-dehydro-3-deoxy-D-arabino-heptonate. NAD(+) is bound by residues 179-182 (FLNT) and N190. A Zn(2+)-binding site is contributed by E194. 7-phospho-2-dehydro-3-deoxy-D-arabino-heptonate contacts are provided by residues 194–197 (EVIK) and K250. The Proton acceptor; for 3-dehydroquinate synthase activity role is filled by E260. 7-phospho-2-dehydro-3-deoxy-D-arabino-heptonate contacts are provided by residues 264 to 268 (RNLLN) and H271. H271 contacts Zn(2+). H275 functions as the Proton acceptor; for 3-dehydroquinate synthase activity in the catalytic mechanism. Residues H287 and K356 each contribute to the 7-phospho-2-dehydro-3-deoxy-D-arabino-heptonate site. H287 serves as a coordination point for Zn(2+). Residues 397 to 842 (VSPGVPKGLD…WDCLSQTFKV (446 aa)) form an EPSP synthase region. The active-site For EPSP synthase activity is C824. The interval 866–973 (ASIFIIGMRG…RRKQNTFFVS (108 aa)) is shikimate kinase. 872-879 (GMRGAGKT) lines the ATP pocket. The segment at 974–1194 (LTLPDLGLAA…AAPGQLSARE (221 aa)) is 3-dehydroquinase. Residue H1097 is the Proton acceptor; for 3-dehydroquinate dehydratase activity of the active site. Residue K1125 is the Schiff-base intermediate with substrate; for 3-dehydroquinate dehydratase activity of the active site. Residues 1207–1538 (AKKFAVIGNP…YEHPVLNHSS (332 aa)) form a shikimate dehydrogenase region.

This sequence in the N-terminal section; belongs to the sugar phosphate cyclases superfamily. Dehydroquinate synthase family. The protein in the 2nd section; belongs to the EPSP synthase family. It in the 3rd section; belongs to the shikimate kinase family. In the 4th section; belongs to the type-I 3-dehydroquinase family. This sequence in the C-terminal section; belongs to the shikimate dehydrogenase family. In terms of assembly, homodimer. The cofactor is Zn(2+).

It is found in the cytoplasm. The catalysed reaction is 7-phospho-2-dehydro-3-deoxy-D-arabino-heptonate = 3-dehydroquinate + phosphate. It catalyses the reaction 3-dehydroquinate = 3-dehydroshikimate + H2O. It carries out the reaction shikimate + NADP(+) = 3-dehydroshikimate + NADPH + H(+). The enzyme catalyses shikimate + ATP = 3-phosphoshikimate + ADP + H(+). The catalysed reaction is 3-phosphoshikimate + phosphoenolpyruvate = 5-O-(1-carboxyvinyl)-3-phosphoshikimate + phosphate. It participates in metabolic intermediate biosynthesis; chorismate biosynthesis; chorismate from D-erythrose 4-phosphate and phosphoenolpyruvate: step 2/7. The protein operates within metabolic intermediate biosynthesis; chorismate biosynthesis; chorismate from D-erythrose 4-phosphate and phosphoenolpyruvate: step 3/7. Its pathway is metabolic intermediate biosynthesis; chorismate biosynthesis; chorismate from D-erythrose 4-phosphate and phosphoenolpyruvate: step 4/7. It functions in the pathway metabolic intermediate biosynthesis; chorismate biosynthesis; chorismate from D-erythrose 4-phosphate and phosphoenolpyruvate: step 5/7. It participates in metabolic intermediate biosynthesis; chorismate biosynthesis; chorismate from D-erythrose 4-phosphate and phosphoenolpyruvate: step 6/7. Its function is as follows. The AROM polypeptide catalyzes 5 consecutive enzymatic reactions in prechorismate polyaromatic amino acid biosynthesis. The sequence is that of Pentafunctional AROM polypeptide from Ajellomyces capsulatus (strain NAm1 / WU24) (Darling's disease fungus).